The primary structure comprises 366 residues: MSYNTFGHIFRVTTWGESHGPALGATVDGCPPGVAIEAEAIQHWLDRRKPGQNRFTTQRQEPDAVRILSGTFEGRSTGTPIQLMIENTDQRSKDYGEIARSFRPGHADIAYHWKYGLRDYRGGGRSSARETAARVAAGGVARAALAALVPGLRIEGYMVQIGPHAIDRARFDADEIERNPFWCPDPDTAALWADYLDGLRKAHDSVGAIVEVRASGVPAGLGAPIYGKLDSDLAAAMMTINAVKGVEIGEGMAAACLTGSANADEIRMGPEGPEFLTNHAGGILGGISTGQDVVVRFAVKPTSSILTPRRSVTTDGREVEVVTKGRHDPCVGIRAVPVGEAMMACVLLDHLLLDRGQTGGLRGTIG.

Arginine 48 and arginine 54 together coordinate NADP(+). Residues 125 to 127 (RSS), 241 to 242 (NA), glycine 285, 300 to 304 (KPTSS), and arginine 326 contribute to the FMN site.

Belongs to the chorismate synthase family. As to quaternary structure, homotetramer. It depends on FMNH2 as a cofactor.

It carries out the reaction 5-O-(1-carboxyvinyl)-3-phosphoshikimate = chorismate + phosphate. It participates in metabolic intermediate biosynthesis; chorismate biosynthesis; chorismate from D-erythrose 4-phosphate and phosphoenolpyruvate: step 7/7. Its function is as follows. Catalyzes the anti-1,4-elimination of the C-3 phosphate and the C-6 proR hydrogen from 5-enolpyruvylshikimate-3-phosphate (EPSP) to yield chorismate, which is the branch point compound that serves as the starting substrate for the three terminal pathways of aromatic amino acid biosynthesis. This reaction introduces a second double bond into the aromatic ring system. In Cereibacter sphaeroides (strain ATCC 17023 / DSM 158 / JCM 6121 / CCUG 31486 / LMG 2827 / NBRC 12203 / NCIMB 8253 / ATH 2.4.1.) (Rhodobacter sphaeroides), this protein is Chorismate synthase.